An 87-amino-acid polypeptide reads, in one-letter code: Small ribosomal subunit protein bS16 (87 aa).

It belongs to the bacterial ribosomal protein bS16 family.

This is Small ribosomal subunit protein bS16 from Aster yellows witches'-broom phytoplasma (strain AYWB).